We begin with the raw amino-acid sequence, 370 residues long: Prolactin-releasing peptide receptor (370 aa).

Topologically, residues 1 to 62 are extracellular; sequence MASLPTQGPA…LQLVHQLKGL (62 aa). N-linked (GlcNAc...) asparagine glycans are attached at residues Asn-27 and Asn-36. A helical membrane pass occupies residues 63-83; it reads IVLLYSIVVVVGLVGNCLLVL. At 84-101 the chain is on the cytoplasmic side; it reads VIARVRRLHNVTNFLIGN. The chain crosses the membrane as a helical span at residues 102 to 122; sequence LALSDVLMCTACVPLTLAYAF. Over 123-126 the chain is Extracellular; sequence EPRG. Residues 127–147 traverse the membrane as a helical segment; it reads WVFGGGLCHLVFFLQPVTVYV. A disulfide bridge links Cys-134 with Cys-211. Topologically, residues 148–175 are cytoplasmic; it reads SVFTLTTIAVDRYVVLVHPLRRRISLRF. A helical transmembrane segment spans residues 176 to 196; it reads SAYAVLAIWALSAVLALPAAL. Topologically, residues 197 to 225 are extracellular; it reads HTYHVELKPHRVRLCEEFWGSQERQRQLY. A helical transmembrane segment spans residues 226–246; that stretch reads AWGLLLVTYLLPLLVILLSYV. The Cytoplasmic portion of the chain corresponds to 247–276; it reads RVSVNLRNRVVPGCVTQSQADWDRARRRRT. The chain crosses the membrane as a helical span at residues 277-297; sequence FCLLVVVVVVFAVCWLPLHVF. Topologically, residues 298-317 are extracellular; that stretch reads NLLRDLDPHAIDPYAFGLVQ. A helical membrane pass occupies residues 318-338; the sequence is LLCHWLAMSSACYNPFIYAWL. Topologically, residues 339–369 are cytoplasmic; sequence HDSFREELRKLLLAWPRKIAPHGQSMTVSVV. The interval 365–370 is required for interaction with GRIP1, GRIP2 and PICK1; the sequence is TVSVVI.

Belongs to the G-protein coupled receptor 1 family. In terms of assembly, interacts through its C-terminal region with the PDZ domain-containing proteins GRIP1, GRIP2 and PICK1. Interacts with PDZ domains 4 and 5 of GRIP1 and with the PDZ domain of PICK1.

The protein localises to the cell membrane. Functionally, receptor for prolactin-releasing peptide (PrRP). Implicated in lactation, regulation of food intake and pain-signal processing. The sequence is that of Prolactin-releasing peptide receptor (PRLHR) from Bos taurus (Bovine).